The chain runs to 180 residues: Oligoribonuclease (180 aa).

Residues 7–170 enclose the Exonuclease domain; sequence LIWIDLEMTG…DDIRESIAEL (164 aa). Residue Y128 is part of the active site.

Belongs to the oligoribonuclease family.

The protein localises to the cytoplasm. Its function is as follows. 3'-to-5' exoribonuclease specific for small oligoribonucleotides. This Pseudomonas aeruginosa (strain UCBPP-PA14) protein is Oligoribonuclease.